The following is a 935-amino-acid chain: Protocadherin gamma-A11 (935 aa).

Positions 1 to 29 (MANRLQRGDRSRLLLLLCIFLGTLRGFRA) are cleaved as a signal peptide. 6 Cadherin domains span residues 30–134 (RQIR…APSF), 135–243 (QEDE…IPMF), 244–348 (TQSV…APEI), 349–453 (TITS…PPVF), 454–563 (PHSS…APEI), and 571–677 (DGST…ADLG). The Extracellular segment spans residues 30–693 (RQIRYSVPEE…NSETSDLSLY (664 aa)). An N-linked (GlcNAc...) asparagine glycan is attached at Asn48. Asn255, Asn266, Asn420, and Asn546 each carry an N-linked (GlcNAc...) asparagine glycan. Residues 694–714 (LVVAVAAVSCIFLVFVIVLLA) traverse the membrane as a helical segment. The Cytoplasmic portion of the chain corresponds to 715 to 935 (LRLWRWHKSR…KKKSGKKEKK (221 aa)). Disordered regions lie at residues 805-844 (CDPT…WPNN) and 905-935 (ATLT…KEKK). The segment covering 807 to 844 (PTSNQQAPPNTDWRFSQAQRPGTSGSQNGDDTGTWPNN) has biased composition (polar residues). Residues 925–935 (NKKKSGKKEKK) are compositionally biased toward basic residues.

It localises to the cell membrane. Potential calcium-dependent cell-adhesion protein. May be involved in the establishment and maintenance of specific neuronal connections in the brain. The sequence is that of Protocadherin gamma-A11 (PCDHGA11) from Homo sapiens (Human).